The primary structure comprises 272 residues: Phosphate import ATP-binding protein PstB (272 aa).

Residues 26 to 267 (IVVKNWNLYY…PQVKRTEDYI (242 aa)) enclose the ABC transporter domain. 58–65 (GPSGCGKS) is a binding site for ATP.

The protein belongs to the ABC transporter superfamily. Phosphate importer (TC 3.A.1.7) family. The complex is composed of two ATP-binding proteins (PstB), two transmembrane proteins (PstC and PstA) and a solute-binding protein (PstS).

It is found in the cell inner membrane. The catalysed reaction is phosphate(out) + ATP + H2O = ADP + 2 phosphate(in) + H(+). Functionally, part of the ABC transporter complex PstSACB involved in phosphate import. Responsible for energy coupling to the transport system. This chain is Phosphate import ATP-binding protein PstB, found in Hydrogenovibrio crunogenus (strain DSM 25203 / XCL-2) (Thiomicrospira crunogena).